The primary structure comprises 545 residues: Esterase-5C (545 aa).

The first 19 residues, 1–19 (MLAARLIILLSFYWLSASA), serve as a signal peptide directing secretion. Residues Cys-84 and Cys-103 are joined by a disulfide bond. Residue Asn-113 is glycosylated (N-linked (GlcNAc...) asparagine). Ser-207 acts as the Acyl-ester intermediate in catalysis. Residues Cys-259 and Cys-271 are joined by a disulfide bond. Asn-421 is a glycosylation site (N-linked (GlcNAc...) asparagine). The Charge relay system role is filled by His-467. The N-linked (GlcNAc...) asparagine glycan is linked to Asn-507. A disulfide bond links Cys-515 and Cys-536.

Belongs to the type-B carboxylesterase/lipase family.

Its subcellular location is the secreted. It carries out the reaction a carboxylic ester + H2O = an alcohol + a carboxylate + H(+). This is Esterase-5C (Est-5C) from Drosophila miranda (Fruit fly).